The sequence spans 82 residues: Lectin-D2 (82 aa).

Chitin-binding type-1 domains follow at residues 1 to 42 and 43 to 82; these read APEC…QCDY and WRCGRDFGGRLCEEDMCCSKYGWCGYSDDHCEDGCQSQCD. 4 cysteine pairs are disulfide-bonded: Cys-4–Cys-19, Cys-13–Cys-25, Cys-18–Cys-32, and Cys-36–Cys-40. A carbohydrate-binding residues include Ser-20, Trp-22, Tyr-24, and Tyr-31. A carbohydrate is bound at residue Trp-43. 4 disulfides stabilise this stretch: Cys-45-Cys-60, Cys-54-Cys-66, Cys-59-Cys-73, and Cys-77-Cys-81. A carbohydrate is bound by residues Ser-61, Tyr-63, Trp-65, and His-72.

Monomer.

Its function is as follows. N-acetyl-D-glucosamine binding lectin. Shows no hemagglutinating activity towards rabbit erythrocytes and weak activity towards trypsin-treated erythrocytes. Has mitogenic activity towards human peripheral blood lymphocytes (HPBL). This is Lectin-D2 from Phytolacca americana (American pokeweed).